A 291-amino-acid chain; its full sequence is Putative fatty acid elongase 4 (291 aa).

Helical transmembrane passes span 46–66 (ILFQKYWYHSITISVLYFILI), 79–99 (FTLKYPLILWNGALAAFSIIA), and 254–274 (NLYLAFVIYVTFAILFIQFFV).

It belongs to the ELO family.

The protein resides in the membrane. It catalyses the reaction a very-long-chain acyl-CoA + malonyl-CoA + H(+) = a very-long-chain 3-oxoacyl-CoA + CO2 + CoA. It participates in lipid metabolism; fatty acid biosynthesis. In terms of biological role, could be implicated in synthesis of very long chain fatty acids. This chain is Putative fatty acid elongase 4 (elo-4), found in Caenorhabditis elegans.